Here is a 960-residue protein sequence, read N- to C-terminus: Phosphoenolpyruvate carboxylase 1 (960 aa).

Position 7 is a phosphoserine (Ser7). Residues His168 and Lys596 contribute to the active site.

It belongs to the PEPCase type 1 family. In terms of assembly, homotetramer. The cofactor is Mg(2+).

Its subcellular location is the cytoplasm. It carries out the reaction oxaloacetate + phosphate = phosphoenolpyruvate + hydrogencarbonate. The protein operates within photosynthesis; C3 acid pathway. Its activity is regulated as follows. By light-reversible phosphorylation. Functionally, through the carboxylation of phosphoenolpyruvate (PEP) it forms oxaloacetate, a four-carbon dicarboxylic acid source for the tricarboxylic acid cycle. This chain is Phosphoenolpyruvate carboxylase 1 (PEPC), found in Sorghum bicolor (Sorghum).